Here is a 151-residue protein sequence, read N- to C-terminus: Alpha-latroinsectotoxin-Lh1a (151 aa).

ANK repeat units follow at residues T21–A37, I41–I52, V56–D80, N84–L104, K105–K116, Q117–K125, T126–K146, and Y147–R151.

Belongs to the cationic peptide 01 (latrotoxin) family. 02 (alpha-latroinsectotoxin) subfamily. As to quaternary structure, homotetramer in membranes. As to expression, expressed by the venom gland.

It is found in the secreted. The protein localises to the target cell membrane. Insecticidal presynaptic neurotoxin that induces massive neurotransmitter release at insect (but not vertebrate) neuromuscular junctions. Native toxin forms cation-permeable pores (with high permeability to calcium) in lipid membranes locust muscle membrane and artificial lipid bilayers. May bind to insect neurexin-1 homolog, insect adhesion G protein-coupled receptor L1 homolog, and insect receptor-type tyrosine-protein phosphatase S homolog, and induces neurotransmitter exocytosis both by forming tetrameric pores in membranes and signaling via G protein-coupled receptor. Oligomerization is a process independent of divalent cations. The toxin forms channels with 0.55-0.58 nm entrance diameter and a relatively small conductance in planar phospholipid membranes. The chain is Alpha-latroinsectotoxin-Lh1a from Latrodectus hasselti (Redback spider).